The following is a 187-amino-acid chain: UPF0200 protein MM_1313 (187 aa).

ATP is bound at residue 9–16 (GMPASGKS).

It belongs to the UPF0200 family.

This is UPF0200 protein MM_1313 from Methanosarcina mazei (strain ATCC BAA-159 / DSM 3647 / Goe1 / Go1 / JCM 11833 / OCM 88) (Methanosarcina frisia).